Here is a 347-residue protein sequence, read N- to C-terminus: N-acetyl-gamma-glutamyl-phosphate reductase (347 aa).

The active site involves C153.

It belongs to the NAGSA dehydrogenase family. Type 1 subfamily.

The protein localises to the cytoplasm. The catalysed reaction is N-acetyl-L-glutamate 5-semialdehyde + phosphate + NADP(+) = N-acetyl-L-glutamyl 5-phosphate + NADPH + H(+). The protein operates within amino-acid biosynthesis; L-arginine biosynthesis; N(2)-acetyl-L-ornithine from L-glutamate: step 3/4. Its function is as follows. Catalyzes the NADPH-dependent reduction of N-acetyl-5-glutamyl phosphate to yield N-acetyl-L-glutamate 5-semialdehyde. The chain is N-acetyl-gamma-glutamyl-phosphate reductase from Mycobacterium avium (strain 104).